A 409-amino-acid chain; its full sequence is Tyrosine--tRNA ligase (409 aa).

A 'HIGH' region motif is present at residues 54-63 (PTAPDIHLGH). Positions 238–242 (KMSKS) match the 'KMSKS' region motif. Lys241 lines the ATP pocket. An S4 RNA-binding domain is found at 347 to 407 (QGILRILREA…GKRKFARVKL (61 aa)).

Belongs to the class-I aminoacyl-tRNA synthetase family. TyrS type 2 subfamily. As to quaternary structure, homodimer.

It localises to the cytoplasm. The enzyme catalyses tRNA(Tyr) + L-tyrosine + ATP = L-tyrosyl-tRNA(Tyr) + AMP + diphosphate + H(+). Its function is as follows. Catalyzes the attachment of tyrosine to tRNA(Tyr) in a two-step reaction: tyrosine is first activated by ATP to form Tyr-AMP and then transferred to the acceptor end of tRNA(Tyr). In Bordetella pertussis (strain Tohama I / ATCC BAA-589 / NCTC 13251), this protein is Tyrosine--tRNA ligase.